The chain runs to 541 residues: Sorting nexin-27 (541 aa).

Residues 1 to 42 (MADEDGEGIHPSAPHRNGGGGGGGGSGLHCAGNGGGGGGGPR) are disordered. Over residues 17–41 (NGGGGGGGGSGLHCAGNGGGGGGGP) the composition is skewed to gly residues. The 94-residue stretch at 43–136 (VVRIVKSESG…ELILTVLSVP (94 aa)) folds into the PDZ domain. Phosphoserine is present on residues S51 and S62. Residues 161 to 269 (QAVPISVPRY…EFLSESDENY (109 aa)) form the PX domain. One can recognise a Ras-associating domain in the interval 273-362 (SDVELRVALP…TCLTIRKWLF (90 aa)). The segment at 273 to 362 (SDVELRVALP…TCLTIRKWLF (90 aa)) is FERM-like region F1. Residues 373–421 (NDLAVTYFFHQAVDDVKKGYIKAEEKSYQLQKLYEQRKMVMYLNMLRTC) are FERM-like region F2. The interval 425–525 (NEIIFPHCAC…RVFCELKWRK (101 aa)) is FERM-like region F3.

Belongs to the sorting nexin family. As to quaternary structure, core component of the SNX27-retromer, a multiprotein complex composed of SNX27, the WASH complex and the retromer complex. Interacts (via PDZ domain) with a number of target transmembrane proteins (via PDZ-binding motif): ABCC4, ADRB2, ARHGEF7, GRIA1, GRIA2, GRIN1, GRIN2A GRIN2C, KCNJ6, KCNJ9 and SLC2A1/GLUT1. Interacts (via the FERM-like regions) with the WASH complex. Interacts with SNX1. Interacts with CYTIP. Isoform 1 and isoform 2 directly interact with DGKZ. Isoform 1 and isoform 2 interact with HT4R isoform 5-HTA(A). Interacts with MCC. Interacts (via PDZ domains) with SLC9A3; directs SLC9A3 membrane insertion from early endosomes to the plasma membrane. In terms of tissue distribution, widely expressed. Expressed in cells of hematopoietic origin (at protein level).

It is found in the early endosome membrane. Its subcellular location is the cytoplasm. It localises to the cytosol. Its function is as follows. Involved in the retrograde transport from endosome to plasma membrane, a trafficking pathway that promotes the recycling of internalized transmembrane proteins. Following internalization, endocytosed transmembrane proteins are delivered to early endosomes and recycled to the plasma membrane instead of being degraded in lysosomes. SNX27 specifically binds and directs sorting of a subset of transmembrane proteins containing a PDZ-binding motif at the C-terminus: following interaction with target transmembrane proteins, associates with the retromer complex, preventing entry into the lysosomal pathway, and promotes retromer-tubule based plasma membrane recycling. SNX27 also binds with the WASH complex. Interacts with membranes containing phosphatidylinositol-3-phosphate (PtdIns(3P)). May participate in establishment of natural killer cell polarity. Recruits CYTIP to early endosomes. The sequence is that of Sorting nexin-27 (SNX27) from Homo sapiens (Human).